The following is a 672-amino-acid chain: Peptidoglycan D,D-transpeptidase MrdA (672 aa).

A helical transmembrane segment spans residues 21–41; sequence IFFAVGLVIICLLVLASRYAY. Ser-326 acts as the Acyl-ester intermediate in catalysis. Zn(2+) contacts are provided by Asp-350, Asp-365, His-371, and Cys-384. A disordered region spans residues 616 to 672; that stretch reads ANHQVNGGLMTAGIKPGELPSGNESASSTPATSAPTSAAASTPQATPTRPATNEVDE. Over residues 640-672 the composition is skewed to low complexity; the sequence is SASSTPATSAPTSAAASTPQATPTRPATNEVDE.

The protein belongs to the transpeptidase family. MrdA subfamily. In terms of assembly, monomer. Zn(2+) serves as cofactor.

The protein localises to the cell inner membrane. It carries out the reaction Preferential cleavage: (Ac)2-L-Lys-D-Ala-|-D-Ala. Also transpeptidation of peptidyl-alanyl moieties that are N-acyl substituents of D-alanine.. It functions in the pathway cell wall biogenesis; peptidoglycan biosynthesis. Inhibited by the beta-lactams sulbactam and piperacillin-tazobactam. Its function is as follows. Catalyzes cross-linking of the peptidoglycan cell wall. Involved in the determination of the rod shape of the cell. The protein is Peptidoglycan D,D-transpeptidase MrdA of Acinetobacter baumannii (strain ATCC 19606 / DSM 30007 / JCM 6841 / CCUG 19606 / CIP 70.34 / NBRC 109757 / NCIMB 12457 / NCTC 12156 / 81).